Reading from the N-terminus, the 507-residue chain is ATP synthase subunit alpha (507 aa).

169-176 (GDRQTGKT) serves as a coordination point for ATP.

This sequence belongs to the ATPase alpha/beta chains family. As to quaternary structure, F-type ATPases have 2 components, CF(1) - the catalytic core - and CF(0) - the membrane proton channel. CF(1) has five subunits: alpha(3), beta(3), gamma(1), delta(1), epsilon(1). CF(0) has three main subunits: a(1), b(2) and c(9-12). The alpha and beta chains form an alternating ring which encloses part of the gamma chain. CF(1) is attached to CF(0) by a central stalk formed by the gamma and epsilon chains, while a peripheral stalk is formed by the delta and b chains.

The protein localises to the cell inner membrane. It carries out the reaction ATP + H2O + 4 H(+)(in) = ADP + phosphate + 5 H(+)(out). Its function is as follows. Produces ATP from ADP in the presence of a proton gradient across the membrane. The alpha chain is a regulatory subunit. This Magnetococcus marinus (strain ATCC BAA-1437 / JCM 17883 / MC-1) protein is ATP synthase subunit alpha.